The sequence spans 441 residues: Glutamyl-tRNA reductase (441 aa).

Substrate-binding positions include 58 to 61 (TCNR), S116, 121 to 123 (EPD), and Q127. Catalysis depends on C59, which acts as the Nucleophile. 195-200 (GAGMAG) provides a ligand contact to NADP(+).

Belongs to the glutamyl-tRNA reductase family. Homodimer.

It carries out the reaction (S)-4-amino-5-oxopentanoate + tRNA(Glu) + NADP(+) = L-glutamyl-tRNA(Glu) + NADPH + H(+). Its pathway is porphyrin-containing compound metabolism; protoporphyrin-IX biosynthesis; 5-aminolevulinate from L-glutamyl-tRNA(Glu): step 1/2. Functionally, catalyzes the NADPH-dependent reduction of glutamyl-tRNA(Glu) to glutamate 1-semialdehyde (GSA). The chain is Glutamyl-tRNA reductase from Ignicoccus hospitalis (strain KIN4/I / DSM 18386 / JCM 14125).